The sequence spans 90 residues: Sec-independent protein translocase protein TatA (90 aa).

A helical transmembrane segment spans residues 2–22 (GVGGISIWQLLIVLVIILLLF). 2 stretches are compositionally biased toward basic and acidic residues: residues 45–68 (LRDE…HKAE) and 76–90 (ADAD…DEHK). Positions 45–90 (LRDEERRDAEEAATIEHKQAHKAENPSQRQQADADFKIKSGNDEHK) are disordered.

Belongs to the TatA/E family. In terms of assembly, the Tat system comprises two distinct complexes: a TatABC complex, containing multiple copies of TatA, TatB and TatC subunits, and a separate TatA complex, containing only TatA subunits. Substrates initially bind to the TatABC complex, which probably triggers association of the separate TatA complex to form the active translocon.

It is found in the cell inner membrane. In terms of biological role, part of the twin-arginine translocation (Tat) system that transports large folded proteins containing a characteristic twin-arginine motif in their signal peptide across membranes. TatA could form the protein-conducting channel of the Tat system. This chain is Sec-independent protein translocase protein TatA, found in Nitrosococcus oceani (strain ATCC 19707 / BCRC 17464 / JCM 30415 / NCIMB 11848 / C-107).